The primary structure comprises 157 residues: Acetyltransferase PseH (157 aa).

In terms of domain architecture, N-acetyltransferase spans 5-152 (KNFTELNSQE…YHICLKQSDC (148 aa)).

In terms of biological role, catalyzes the third step in the biosynthesis of pseudaminic acid, a sialic-acid-like sugar that is used to modify flagellin. Mediates N-4 acetylation of UDP-4-amino-4,6-dideoxy-beta-L-AltNAc to form UDP-2,4-diacetamido-2,4,6-trideoxy-beta-L-altropyranose. The polypeptide is Acetyltransferase PseH (pseH) (Campylobacter jejuni subsp. jejuni serotype O:23/36 (strain 81-176)).